The sequence spans 183 residues: Capsid protein (183 aa).

A disordered region spans residues 136–183; sequence NAPILSTLPETTVVRRRGRSPRRRTPSPRRRRSQSPRRRRSQSRESQC. The segment covering 149–176 has biased composition (basic residues); the sequence is VRRRGRSPRRRTPSPRRRRSQSPRRRRS. Ser155, Ser162, and Ser170 each carry phosphoserine; by host. A 1; half-length repeat occupies 155-161; it reads SPRRRTP. Residues 155–177 are 3 X 8 AA repeats of S-P-R-R-R-[PR]-S-Q; that stretch reads SPRRRTPSPRRRRSQSPRRRRSQ. A Bipartite nuclear localization signal motif is present at residues 158 to 175; sequence RRTPSPRRRRSQSPRRRR. 2 repeat units span residues 162–169 and 170–177. The tract at residues 177 to 183 is RNA binding; that stretch reads QSRESQC.

Belongs to the orthohepadnavirus core antigen family. As to quaternary structure, homodimerizes, then multimerizes. Interacts with cytosol exposed regions of viral L glycoprotein present in the reticulum-to-Golgi compartment. Interacts with human FLNB. Phosphorylated form interacts with host importin alpha; this interaction depends on the exposure of the NLS, which itself depends upon genome maturation and/or phosphorylation of the capsid protein. Interacts with host NUP153. In terms of processing, phosphorylated by host SRPK1, SRPK2, and maybe protein kinase C or GAPDH. Phosphorylation is critical for pregenomic RNA packaging. Protein kinase C phosphorylation is stimulated by HBx protein and may play a role in transport of the viral genome to the nucleus at the late step during the viral replication cycle.

It is found in the virion. The protein localises to the host cytoplasm. In terms of biological role, self assembles to form an icosahedral capsid. Most capsids appear to be large particles with an icosahedral symmetry of T=4 and consist of 240 copies of capsid protein, though a fraction forms smaller T=3 particles consisting of 180 capsid proteins. Entering capsids are transported along microtubules to the nucleus. Phosphorylation of the capsid is thought to induce exposure of nuclear localization signal in the C-terminal portion of the capsid protein that allows binding to the nuclear pore complex via the importin (karyopherin-) alpha and beta. Capsids are imported in intact form through the nuclear pore into the nuclear basket, where it probably binds NUP153. Only capsids that contain the mature viral genome can release the viral DNA and capsid protein into the nucleoplasm. Immature capsids get stuck in the basket. Capsids encapsulate the pre-genomic RNA and the P protein. Pre-genomic RNA is reverse-transcribed into DNA while the capsid is still in the cytoplasm. The capsid can then either be directed to the nucleus, providing more genomes for transcription, or bud through the endoplasmic reticulum to provide new virions. The chain is Capsid protein from Hepatitis B virus genotype B1 subtype adw (isolate Japan/pJDW233/1988) (HBV-B).